The following is a 575-amino-acid chain: MESFDNIYLDLSNQPGKCKLAETGLGWRPSGGGDTFTLDSSNIGAAQWSRAAKGYELKILSRSSGVIQLDGFDQEDFERLSKAFKIWYGINVESREHALRGWNWGKAEFTKAELAFNVQNRPAFEVPYSEISNTNLAGKNEVAVELSLSVDPNGSKPAGSTKNRGRKAAAGPDELVEMRFYIPGTAVKTENGIKGENADEKNGGEGEENGEEQNAANLFYELLMEKAEIGDVAGDTFATFLDVLHLTPRGRFDIDMYESSFRLRGKTYDYKIQYSSIKKFFLLPKNDDTHTLIVLGLEPPLRQGQTRYPFLVMQLKLDEEISLELNMTEELLETRYKDKLEPRYEEPIHQVITKIFRGLSGKKVIMPSKDFVSHHGHSGVKCSIKANEGLLYFLDKSLIFVPKPATYIQMENVAVVTMSRVGGAISASRTFDITVSLKAGMGEHQFSNINREEQQPLEEFFKAKNIRIKNEMSDDTNALIAAALDNDDMMSSDEDGGGRPDRGSADEDEESVDEDFQADSDSDVAEEYDSAHESSGSGSDAEMDDASDAGVDEDEDADADMSEEERPKKKSKTGK.

3 disordered regions span residues 148–169, 191–211, and 484–575; these read LSVDPNGSKPAGSTKNRGRKAA, NGIKGENADEKNGGEGEENGE, and LDND…KTGK. The segment covering 191 to 204 has biased composition (basic and acidic residues); it reads NGIKGENADEKNGG. A compositionally biased stretch (acidic residues) spans 485-495; that stretch reads DNDDMMSSDED. A compositionally biased stretch (basic and acidic residues) spans 496-505; it reads GGGRPDRGSA. Acidic residues-rich tracts occupy residues 506–528 and 541–563; these read DEDEESVDEDFQADSDSDVAEEY and AEMDDASDAGVDEDEDADADMSE.

This sequence belongs to the SSRP1 family. As to quaternary structure, forms a stable heterodimer with spt16. The spt16-pob3 dimer weakly associates with multiple molecules of nhp6 to form the FACT complex.

It localises to the nucleus. The protein resides in the chromosome. In terms of biological role, component of the FACT complex, a general chromatin factor that acts to reorganize nucleosomes. The FACT complex is involved in multiple processes that require DNA as a template such as mRNA elongation, DNA replication and DNA repair. During transcription elongation the FACT complex acts as a histone chaperone that both destabilizes and restores nucleosomal structure. It facilitates the passage of RNA polymerase II and transcription by promoting the dissociation of one histone H2A-H2B dimer from the nucleosome, then subsequently promotes the reestablishment of the nucleosome following the passage of RNA polymerase II. The protein is FACT complex subunit pob3 (pob3) of Emericella nidulans (strain FGSC A4 / ATCC 38163 / CBS 112.46 / NRRL 194 / M139) (Aspergillus nidulans).